Reading from the N-terminus, the 542-residue chain is MSAKEVRFGTDARGRMLKGINTLADTVKITLGPKGRNVILDTSYGAPRITKDGVTVAREIELSDRFENVGAQMVKEVASRTNEEAGDGTTTATVLAQAIAKEGMKAVAAGMNPMDLKRGIDRAVAIVIAEIRSMSRPVGDSAEIAKVGALSANGEAAIGRQIADAMAKVGTAGVIKVEENKGLETETEVVEGMQFDRGYLSPYFITHAQKMVVELDDCAILLHEGKLTSLASMVPLLEAVVQAEKQLLVVAEDVEGEALTTLVVNKLRGGLKVAAAKAPGFGDGRAAMLEDLAVLTGAHLISAELGTKLETVTLDMLGFAKKVVLTKDSTILIDSAGDKAAIASRIGQIRNQIEDTTSAYNKEKLQERLARLAGGVAVIRVGGATEIEVKERRDRVEDTLNATRAAVQEGVVPGGGAALIHAGKALAGLKGDNPDQDAGIKIIRRAIQAPLRQIADNAGIDGSVVAGKVIENDSATFGFDAQLETYGDMLQAGIIDPTKVVRIALEDAASIAGLLITTEVIIAHKPERGERMSQMDEMGGMM.

Residues 30–33 (TLGP), Lys51, 87–91 (DGTTT), Gly415, and Asp496 contribute to the ATP site.

It belongs to the chaperonin (HSP60) family. In terms of assembly, forms a cylinder of 14 subunits composed of two heptameric rings stacked back-to-back. Interacts with the co-chaperonin GroES.

The protein resides in the cytoplasm. It carries out the reaction ATP + H2O + a folded polypeptide = ADP + phosphate + an unfolded polypeptide.. Its function is as follows. Together with its co-chaperonin GroES, plays an essential role in assisting protein folding. The GroEL-GroES system forms a nano-cage that allows encapsulation of the non-native substrate proteins and provides a physical environment optimized to promote and accelerate protein folding. The polypeptide is Chaperonin GroEL 2 (Cereibacter sphaeroides (strain ATCC 17023 / DSM 158 / JCM 6121 / CCUG 31486 / LMG 2827 / NBRC 12203 / NCIMB 8253 / ATH 2.4.1.) (Rhodobacter sphaeroides)).